A 250-amino-acid chain; its full sequence is Coproheme decarboxylase (250 aa).

Residues Arg-131, 145–149 (YPMNK), His-172, and Gln-185 contribute to the Fe-coproporphyrin III site. Tyr-145 is an active-site residue.

Belongs to the ChdC family. Type 1 subfamily. Requires Fe-coproporphyrin III as cofactor.

It carries out the reaction Fe-coproporphyrin III + 2 H2O2 + 2 H(+) = heme b + 2 CO2 + 4 H2O. The enzyme catalyses Fe-coproporphyrin III + H2O2 + H(+) = harderoheme III + CO2 + 2 H2O. The catalysed reaction is harderoheme III + H2O2 + H(+) = heme b + CO2 + 2 H2O. The protein operates within porphyrin-containing compound metabolism; protoheme biosynthesis. Involved in coproporphyrin-dependent heme b biosynthesis. Catalyzes the decarboxylation of Fe-coproporphyrin III (coproheme) to heme b (protoheme IX), the last step of the pathway. The reaction occurs in a stepwise manner with a three-propionate intermediate. In Staphylococcus aureus (strain MSSA476), this protein is Coproheme decarboxylase.